A 139-amino-acid polypeptide reads, in one-letter code: Hydrogenase maturation factor HypA (139 aa).

Histidine 2 contributes to the Ni(2+) binding site. Zn(2+)-binding residues include cysteine 73, cysteine 76, cysteine 110, and cysteine 113.

It belongs to the HypA/HybF family.

Involved in the maturation of [NiFe] hydrogenases. Required for nickel insertion into the metal center of the hydrogenase. In Pyrococcus horikoshii (strain ATCC 700860 / DSM 12428 / JCM 9974 / NBRC 100139 / OT-3), this protein is Hydrogenase maturation factor HypA.